Reading from the N-terminus, the 85-residue chain is Latartoxin-1a (85 aa).

The first 19 residues, 1-19 (MKVLVFAIVCSVLLQVVLS), serve as a signal peptide directing secretion. The propeptide at 20 to 25 (ADEEAR) is removed in mature form. Positions 22-25 (EEAR) match the Processing quadruplet motif motif. 4 disulfide bridges follow: Cys27–Cys42, Cys34–Cys47, Cys41–Cys64, and Cys49–Cys62.

Belongs to the neurotoxin 19 (CSTX) family. Contains 4 disulfide bonds. Post-translationally, cleavage of the propeptide depends on the processing quadruplet motif (XXXR, with at least one of X being E). As to expression, expressed by the venom gland.

Its subcellular location is the secreted. Its function is as follows. Insect toxin. Causes paralysis in larvae of C.vicina by depolarizing membranes at the neuromuscular junction. The chain is Latartoxin-1a from Lachesana tarabaevi (Spider).